Consider the following 355-residue polypeptide: Trans-enoyl reductase (355 aa).

NADP(+) is bound at residue 45–48 (VDTK). Position 131–138 (131–138 (ISFMTTGL)) interacts with substrate. Residues 166 to 169 (SSAT), 189 to 192 (SPRN), Tyr-207, and 254 to 255 (LE) each bind NADP(+). Substrate is bound at residue 275-279 (GPQML). NADP(+) is bound at residue 344-345 (IS).

Belongs to the zinc-containing alcohol dehydrogenase family. Monomer.

The catalysed reaction is L-serine + 7 malonyl-CoA + acetyl-CoA + 2 S-adenosyl-L-methionine + ATP + 8 NADPH + 11 H(+) = (5S)-3-[(2E,6R,8E,10E,12E)-2,6-dimethyltetradeca-2,8,10,12-tetraenoyl]-5-(hydroxymethyl)pyrrolidine-2,4-dione + AMP + 2 S-adenosyl-L-homocysteine + 7 CO2 + diphosphate + 8 NADP(+) + 8 CoA + 6 H2O. Its pathway is mycotoxin biosynthesis. Functionally, hybrid PKS-NRPS synthetase; part of the gene cluster that mediates the biosynthesis of trichosetin, a trans-fused decalin-containing tetramic acid with antimicrobial activity. The PKS module of PKS-NRPS1 together with the enoylreductase (ER) catalyze the formation of the polyketide unit which is then conjugated to L-serine by the condensation domain of the PKS-NRPS1 NRPS module. Activity of the Dieckmann cyclase domain (RED) results in release of the Dieckmann product intermediate. Diels-Alderase (DA) is involved in endo-selective Diels-Alder cycloaddition to form the decalin ring, leading to the production of N-desmethylequisetin also called trichosetin. The cluster does not contain the equisetin N-methyltransferase and consequently, trichosetin is isolated as final product. The sequence is that of Trans-enoyl reductase from Gibberella fujikuroi (strain CBS 195.34 / IMI 58289 / NRRL A-6831) (Bakanae and foot rot disease fungus).